The primary structure comprises 4644 residues: Cytoplasmic dynein 1 heavy chain 1 (4644 aa).

An N-acetylserine modification is found at Ser2. Positions 2 to 1865 (SETGGGEDGS…SIQMANAKFN (1864 aa)) are stem. 4 coiled-coil regions span residues 48–69 (AALE…FLSD), 179–200 (SVEK…NIEI), 453–476 (AHRK…QLRA), and 541–564 (TEAW…RITA). A Phosphoserine modification is found at Ser68. The interval 446-701 (MVWRINPAHR…NTQEIFDDWA (256 aa)) is interaction with DYNC1I2. The segment at 649-800 (AKQIDRQLTA…EKVEERNTIS (152 aa)) is interaction with DYNC1LI2. At Lys1123 the chain carries N6-acetyllysine. A coiled-coil region spans residues 1169–1201 (TYVQSLKRKIKQFEKQVELYRNGQRLLEKQRFQ). The residue at position 1228 (Ser1228) is a Phosphoserine. 2 coiled-coil regions span residues 1229–1250 (AIQQ…AVES) and 1355–1371 (RKLR…LKNF). AAA regions lie at residues 1866–2097 (YGFE…VLVS), 2178–2450 (EELK…LTRL), 2554–2803 (EVET…WVRG), and 2897–3166 (VFYE…GGRT). ATP contacts are provided by residues 1904 to 1911 (GPAGTGKT) and 2222 to 2229 (GPSGSGKS). The segment at 2389 to 2409 (EDEAQRRRKGKEDEGEEAASP) is disordered. Residues 2593 to 2600 (GPPGSGKT) and 2935 to 2942 (GVSGAGKT) each bind ATP. Coiled-coil stretches lie at residues 3187–3273 (EKRS…ADKQ), 3394–3498 (AIAQ…KNQM), and 3735–3798 (EFQL…VSQQ). The stalk stretch occupies residues 3187–3498 (EKRSELEEQQ…KTSETFKNQM (312 aa)). Lys3478 is subject to N6-acetyllysine. AAA stretches follow at residues 3551–3780 (LSNA…EVTR) and 4003–4219 (AHMF…TVDT). The residue at position 4160 (Ser4160) is a Phosphoserine. Residue Lys4281 is modified to N6-acetyllysine. Thr4364 carries the phosphothreonine modification.

Belongs to the dynein heavy chain family. Homodimer. The cytoplasmic dynein 1 complex consists of two catalytic heavy chains (HCs) and a number of non-catalytic subunits presented by intermediate chains (ICs), light intermediate chains (LICs) and light chains (LCs); the composition seems to vary in respect to the IC, LIC and LC composition. The heavy chain homodimer serves as a scaffold for the probable homodimeric assembly of the respective non-catalytic subunits. The ICs and LICs bind directly to the HC dimer and dynein LCs assemble on the IC dimer. Interacts with DYNC1LI1; DYNC1LI1 and DYNC1LI2 bind mutually exclusive to DYNC1H1. Interacts with DYNC1LI2; DYNC1LI1 and DYNC1LI2 bind mutually exclusive to DYNC1H1. Interacts with DYNC1I2. Interacts with BICD2. Interacts with DNALI1.

The protein localises to the cytoplasm. It is found in the cytoskeleton. Its function is as follows. Cytoplasmic dynein 1 acts as a motor for the intracellular retrograde motility of vesicles and organelles along microtubules. Dynein has ATPase activity; the force-producing power stroke is thought to occur on release of ADP. Plays a role in mitotic spindle assembly and metaphase plate congression. This is Cytoplasmic dynein 1 heavy chain 1 (Dync1h1) from Rattus norvegicus (Rat).